The sequence spans 347 residues: MNPMRKNIAEMAGYVPGFQPRDEQNYTKLNTNENPYPPSPKVIEAILAEVGDNLRKYPDAASRAGCEEAGRLYGFDPDWVIMANGSDEVLNNLIRAFAGEGEEIAYVHPSYSYYSTLAEIQGAKVRTFLLDEGWALKDFPERYTGKLFFLTNPNAPLGFCYPQEFIEELAGRVDGMLVVDEAYADFAKENSLDLVRRLPNVVVTRTFSKSYSLAGMRLGLAIAHPEVIAALNKIRDHYNLDRLAQTACVAALADQEYFQQCVSKIRETRDWFSAELRVLDWDVIPSHGNFVFATPPDRNGKRVYDALFERRILVRYFSDPVLSHGLRISVGTREEMEKTLAALADIG.

Lys209 is subject to N6-(pyridoxal phosphate)lysine.

Belongs to the class-II pyridoxal-phosphate-dependent aminotransferase family. Histidinol-phosphate aminotransferase subfamily. In terms of assembly, homodimer. It depends on pyridoxal 5'-phosphate as a cofactor.

The enzyme catalyses L-histidinol phosphate + 2-oxoglutarate = 3-(imidazol-4-yl)-2-oxopropyl phosphate + L-glutamate. It participates in amino-acid biosynthesis; L-histidine biosynthesis; L-histidine from 5-phospho-alpha-D-ribose 1-diphosphate: step 7/9. The polypeptide is Histidinol-phosphate aminotransferase (Syntrophotalea carbinolica (strain DSM 2380 / NBRC 103641 / GraBd1) (Pelobacter carbinolicus)).